The sequence spans 445 residues: Na(+)-translocating NADH-quinone reductase subunit A (445 aa).

This sequence belongs to the NqrA family. In terms of assembly, composed of six subunits; NqrA, NqrB, NqrC, NqrD, NqrE and NqrF.

It catalyses the reaction a ubiquinone + n Na(+)(in) + NADH + H(+) = a ubiquinol + n Na(+)(out) + NAD(+). Its function is as follows. NQR complex catalyzes the reduction of ubiquinone-1 to ubiquinol by two successive reactions, coupled with the transport of Na(+) ions from the cytoplasm to the periplasm. NqrA to NqrE are probably involved in the second step, the conversion of ubisemiquinone to ubiquinol. This Pseudomonas aeruginosa (strain UCBPP-PA14) protein is Na(+)-translocating NADH-quinone reductase subunit A.